A 514-amino-acid polypeptide reads, in one-letter code: Serine--tRNA ligase, cytoplasmic (514 aa).

Met-1 carries the N-acetylmethionine modification. Residues 9-61 (RVDKGGDPALIRETQEKRFKDPGLVDQLVKADSEWRRCRFRADNLNKLKNLCS) form an interaction with tRNA region. At Ser-241 the chain carries Phosphoserine. The L-serine site is built by Thr-271 and Arg-302. ATP contacts are provided by residues 302–304 (RQE) and 318–321 (VHQF). The residue at position 323 (Lys-323) is an N6-acetyllysine. Glu-325 provides a ligand contact to L-serine. 391-394 (ELVS) lines the ATP pocket. Asn-427 contacts L-serine. The interval 472–514 (KPAPIDQEPSKKQKKQHEGSKKKAAARDVTLENRLQNMEVTDA) is disordered. The span at 479 to 502 (EPSKKQKKQHEGSKKKAAARDVTL) shows a compositional bias: basic and acidic residues. The short motif at 482 to 494 (KKQKKQHEGSKKK) is the Nuclear localization signal element. Over residues 504 to 514 (NRLQNMEVTDA) the composition is skewed to polar residues.

It belongs to the class-II aminoacyl-tRNA synthetase family. Type-1 seryl-tRNA synthetase subfamily. Homodimer. The tRNA molecule may bind across the dimer. Interacts with SIRT2. Interacts with METTL6; interaction is required for the tRNA N(3)-methylcytidine methyltransferase activity of METTL6.

The protein resides in the cytoplasm. It localises to the nucleus. It catalyses the reaction tRNA(Ser) + L-serine + ATP = L-seryl-tRNA(Ser) + AMP + diphosphate + H(+). The enzyme catalyses tRNA(Sec) + L-serine + ATP = L-seryl-tRNA(Sec) + AMP + diphosphate + H(+). The protein operates within aminoacyl-tRNA biosynthesis; selenocysteinyl-tRNA(Sec) biosynthesis; L-seryl-tRNA(Sec) from L-serine and tRNA(Sec): step 1/1. In terms of biological role, catalyzes the attachment of serine to tRNA(Ser) in a two-step reaction: serine is first activated by ATP to form Ser-AMP and then transferred to the acceptor end of tRNA(Ser). Is probably also able to aminoacylate tRNA(Sec) with serine, to form the misacylated tRNA L-seryl-tRNA(Sec), which will be further converted into selenocysteinyl-tRNA(Sec). In the nucleus, binds to the VEGFA core promoter and prevents MYC binding and transcriptional activation by MYC. Recruits SIRT2 to the VEGFA promoter, promoting deacetylation of histone H4 at 'Lys-16' (H4K16). Thereby, inhibits the production of VEGFA and sprouting angiogenesis mediated by VEGFA. The polypeptide is Serine--tRNA ligase, cytoplasmic (SARS1) (Oryctolagus cuniculus (Rabbit)).